We begin with the raw amino-acid sequence, 201 residues long: Small ribosomal subunit protein uS4 (201 aa).

Residues 91–157 (SRLDNVIYRA…VPFQIARETV (67 aa)) enclose the S4 RNA-binding domain.

Belongs to the universal ribosomal protein uS4 family. In terms of assembly, part of the 30S ribosomal subunit. Contacts protein S5. The interaction surface between S4 and S5 is involved in control of translational fidelity.

In terms of biological role, one of the primary rRNA binding proteins, it binds directly to 16S rRNA where it nucleates assembly of the body of the 30S subunit. With S5 and S12 plays an important role in translational accuracy. This Mycobacterium leprae (strain Br4923) protein is Small ribosomal subunit protein uS4.